Here is a 393-residue protein sequence, read N- to C-terminus: S-adenosylmethionine synthase (393 aa).

Histidine 16 is a binding site for ATP. Mg(2+) is bound at residue aspartate 18. Residue glutamate 44 coordinates K(+). Residues glutamate 57 and glutamine 100 each contribute to the L-methionine site. Residues 100–110 (QSNDIAQGVDH) are flexible loop. Residues 167 to 169 (DAK), 238 to 239 (RF), aspartate 247, 253 to 254 (RK), alanine 270, and lysine 274 each bind ATP. Aspartate 247 is a binding site for L-methionine. An L-methionine-binding site is contributed by lysine 278.

This sequence belongs to the AdoMet synthase family. As to quaternary structure, homotetramer; dimer of dimers. The cofactor is Mg(2+). K(+) is required as a cofactor.

The protein resides in the cytoplasm. The catalysed reaction is L-methionine + ATP + H2O = S-adenosyl-L-methionine + phosphate + diphosphate. It participates in amino-acid biosynthesis; S-adenosyl-L-methionine biosynthesis; S-adenosyl-L-methionine from L-methionine: step 1/1. Its function is as follows. Catalyzes the formation of S-adenosylmethionine (AdoMet) from methionine and ATP. The overall synthetic reaction is composed of two sequential steps, AdoMet formation and the subsequent tripolyphosphate hydrolysis which occurs prior to release of AdoMet from the enzyme. In Albidiferax ferrireducens (strain ATCC BAA-621 / DSM 15236 / T118) (Rhodoferax ferrireducens), this protein is S-adenosylmethionine synthase.